The sequence spans 354 residues: MQITKQLWSKAVTKAPLLPLPTKTKVSLAYKLHMPNKTVTPNLTIRSHEPIVFLHGVFGSKKNYGDICQTIANTTHTPVYAIDFRNHGESEHCFPLVNYSQLSKDVVDFCEEHDLKRVSIVGYSLGAKVGLLTMLKHPKLVNSGVIIGNAPIETPQVKVYLKVFLKAMTALIDSAHIKATDKNWREKARAVMSKYIPDASIVQYLLRNVLNKKSSHIPGHTDLISVQMPISHFNKDVIDDISDWPAEEVKGLKFEGPVKVVKGLKSAFITKEGEKAYAEHFPNYTMSTFNTNHLIFAEMPSRVTKTVCDFIKLTRYQLLQQHTRDGKHHTIQKVDPALLNSSEASTVEQATKQL.

Active-site charge relay system residues include serine 124 and histidine 293.

Belongs to the AB hydrolase superfamily.

Functionally, probable alcohol acetyltransferase that uses acetyl-CoA to synthesize acetate esters from various alcohols. Not involved in the synthesis of ethyl acetate. This chain is Probable alcohol acetyltransferase (EAT2), found in Cyberlindnera jadinii (strain ATCC 18201 / CBS 1600 / BCRC 20928 / JCM 3617 / NBRC 0987 / NRRL Y-1542) (Torula yeast).